Here is a 54-residue protein sequence, read N- to C-terminus: Defensin-like protein 1 (54 aa).

4 disulfides stabilise this stretch: Cys6/Cys54, Cys17/Cys39, Cys23/Cys48, and Cys27/Cys50.

Belongs to the DEFL family.

The protein resides in the secreted. In terms of biological role, possesses antifungal activity insensitive to inorganic cations. Causes germ tubes and hyphae to swell and form multiple hyphal buds. Binds to the plasma membrane of the fungus. Has no inhibitory effect on insect gut alpha-amylase. This chain is Defensin-like protein 1, found in Heuchera sanguinea (Coralbells).